Consider the following 217-residue polypeptide: 3,4-dihydroxy-2-butanone 4-phosphate synthase (217 aa).

D-ribulose 5-phosphate is bound by residues 37–38, aspartate 42, 150–154, and glutamate 174; these read RE and RRGHT. Residue glutamate 38 participates in Mg(2+) binding. Histidine 153 lines the Mg(2+) pocket.

It belongs to the DHBP synthase family. In terms of assembly, homodimer. Mg(2+) is required as a cofactor. The cofactor is Mn(2+).

It catalyses the reaction D-ribulose 5-phosphate = (2S)-2-hydroxy-3-oxobutyl phosphate + formate + H(+). It functions in the pathway cofactor biosynthesis; riboflavin biosynthesis; 2-hydroxy-3-oxobutyl phosphate from D-ribulose 5-phosphate: step 1/1. Functionally, catalyzes the conversion of D-ribulose 5-phosphate to formate and 3,4-dihydroxy-2-butanone 4-phosphate. This Shewanella sp. (strain MR-4) protein is 3,4-dihydroxy-2-butanone 4-phosphate synthase.